The primary structure comprises 197 residues: Peptide deformylase (197 aa).

Fe cation is bound by residues cysteine 106 and histidine 148. The active site involves glutamate 149. Histidine 152 provides a ligand contact to Fe cation.

The protein belongs to the polypeptide deformylase family. Requires Fe(2+) as cofactor.

The enzyme catalyses N-terminal N-formyl-L-methionyl-[peptide] + H2O = N-terminal L-methionyl-[peptide] + formate. Functionally, removes the formyl group from the N-terminal Met of newly synthesized proteins. Requires at least a dipeptide for an efficient rate of reaction. N-terminal L-methionine is a prerequisite for activity but the enzyme has broad specificity at other positions. The chain is Peptide deformylase from Mycolicibacterium gilvum (strain PYR-GCK) (Mycobacterium gilvum (strain PYR-GCK)).